An 829-amino-acid chain; its full sequence is Cadherin-3 (829 aa).

The N-terminal stretch at 1–24 is a signal peptide; that stretch reads MGLPRGPLASLLLLQVCWLQCAAS. Positions 25–107 are excised as a propeptide; it reads EPCRAVFREA…SKRILRRHKR (83 aa). Cadherin domains are found at residues 108–215, 216–328, 329–440, 441–546, and 547–650; these read DWVV…KPKF, TQDT…APMF, DPQK…APVF, VPPS…DHGP, and VPEP…CPGP. Residues 108–654 are Extracellular-facing; sequence DWVVAPISVP…ETCPGPWKGG (547 aa). An N-linked (GlcNAc...) asparagine glycan is attached at Asn200. N-linked (GlcNAc...) asparagine glycosylation is present at Asn566. The chain crosses the membrane as a helical span at residues 655 to 677; that stretch reads FILPVLGAVLALLFLLLVLLLLV. The Cytoplasmic portion of the chain corresponds to 678 to 829; it reads RKKRKIKEPL…ADMYGGGEDD (152 aa).

As to quaternary structure, interacts with CDCP1 and CTNNB1. In terms of tissue distribution, expressed in some normal epithelial tissues and in some carcinoma cell lines.

Its subcellular location is the cell membrane. Functionally, cadherins are calcium-dependent cell adhesion proteins. They preferentially interact with themselves in a homophilic manner in connecting cells; cadherins may thus contribute to the sorting of heterogeneous cell types. This is Cadherin-3 (CDH3) from Homo sapiens (Human).